The chain runs to 487 residues: 7-deoxyloganetin glucosyltransferase (487 aa).

Residue histidine 25 is the Proton acceptor of the active site. Position 25 (histidine 25) interacts with an anthocyanidin. Aspartate 129 acts as the Charge relay in catalysis. UDP-alpha-D-glucose-binding residues include threonine 151, glutamine 366, histidine 381, tryptophan 384, asparagine 385, serine 386, and glutamate 389. Alanine 404 is a binding site for an anthocyanidin. Positions 405 and 406 each coordinate UDP-alpha-D-glucose.

Belongs to the UDP-glycosyltransferase family. In terms of tissue distribution, expressed in roots.

It carries out the reaction 7-deoxyloganetin + UDP-alpha-D-glucose = 7-deoxyloganin + UDP + H(+). In terms of biological role, iridoid glucosyltransferase acting exclusively on 7-deoxyloganetin. No activity with 7-deoxyloganetic acid. The sequence is that of 7-deoxyloganetin glucosyltransferase (UGT85A23) from Catharanthus roseus (Madagascar periwinkle).